Reading from the N-terminus, the 141-residue chain is Large ribosomal subunit protein uL11 (141 aa).

This sequence belongs to the universal ribosomal protein uL11 family. As to quaternary structure, part of the ribosomal stalk of the 50S ribosomal subunit. Interacts with L10 and the large rRNA to form the base of the stalk. L10 forms an elongated spine to which L12 dimers bind in a sequential fashion forming a multimeric L10(L12)X complex. Post-translationally, one or more lysine residues are methylated.

Its function is as follows. Forms part of the ribosomal stalk which helps the ribosome interact with GTP-bound translation factors. This Nostoc sp. (strain PCC 7120 / SAG 25.82 / UTEX 2576) protein is Large ribosomal subunit protein uL11.